Consider the following 290-residue polypeptide: Probable adenylate kinase 2, chloroplastic (290 aa).

Positions 1–10 (MASSMAATAT) are enriched in low complexity. The disordered stretch occupies residues 1–37 (MASSMAATATLSPPVLSAERPTVRGGLFLPPSPATSR). A chloroplast-targeting transit peptide spans 1–61 (MASSMAATAT…ATRKPRSLPR (61 aa)). 83 to 88 (ASGKGT) lines the ATP pocket. The NMP stretch occupies residues 103 to 132 (SAGDLLRAEIAAGSENGKRAKEFMEKGQLV). Residues Arg-109, 130-132 (QLV), 159-162 (GYPR), and Gln-166 each bind AMP. Residues Arg-193, Arg-197, and 206-207 (IY) each bind ATP. The interval 196-229 (GRRLDPVTGKIYHLKYSPPENEEIASRLTQRFDD) is LID. Residues Arg-226 and Arg-237 each coordinate AMP.

It belongs to the adenylate kinase family.

Its subcellular location is the plastid. The protein resides in the chloroplast. It carries out the reaction AMP + ATP = 2 ADP. In terms of biological role, catalyzes the reversible transfer of the terminal phosphate group between ATP and AMP. Plays an important role in cellular energy homeostasis and in adenine nucleotide metabolism. This chain is Probable adenylate kinase 2, chloroplastic, found in Oryza sativa subsp. japonica (Rice).